The chain runs to 638 residues: 1-deoxy-D-xylulose-5-phosphate synthase (638 aa).

Thiamine diphosphate contacts are provided by residues H81 and 122 to 124 (GHS). D153 serves as a coordination point for Mg(2+). Thiamine diphosphate-binding positions include 154–155 (GS), N182, Y293, and E377. N182 serves as a coordination point for Mg(2+).

This sequence belongs to the transketolase family. DXPS subfamily. In terms of assembly, homodimer. Requires Mg(2+) as cofactor. Thiamine diphosphate is required as a cofactor.

It catalyses the reaction D-glyceraldehyde 3-phosphate + pyruvate + H(+) = 1-deoxy-D-xylulose 5-phosphate + CO2. It participates in metabolic intermediate biosynthesis; 1-deoxy-D-xylulose 5-phosphate biosynthesis; 1-deoxy-D-xylulose 5-phosphate from D-glyceraldehyde 3-phosphate and pyruvate: step 1/1. Its function is as follows. Catalyzes the acyloin condensation reaction between C atoms 2 and 3 of pyruvate and glyceraldehyde 3-phosphate to yield 1-deoxy-D-xylulose-5-phosphate (DXP). This chain is 1-deoxy-D-xylulose-5-phosphate synthase, found in Oleidesulfovibrio alaskensis (strain ATCC BAA-1058 / DSM 17464 / G20) (Desulfovibrio alaskensis).